Consider the following 302-residue polypeptide: Uricase (302 aa).

Catalysis depends on charge relay system residues K22 and T67. T67, D68, F163, R180, Q223, and N249 together coordinate urate. The Charge relay system role is filled by H251.

The protein belongs to the uricase family. As to quaternary structure, homotetramer.

It carries out the reaction urate + O2 + H2O = 5-hydroxyisourate + H2O2. Its pathway is purine metabolism; urate degradation; (S)-allantoin from urate: step 1/3. Its function is as follows. Catalyzes the oxidation of uric acid to 5-hydroxyisourate, which is further processed to form (S)-allantoin. This Arthrobacter globiformis protein is Uricase (uox).